We begin with the raw amino-acid sequence, 359 residues long: tRNA-specific 2-thiouridylase MnmA (359 aa).

ATP-binding positions include 6 to 13 and Leu32; that span reads AMSGGVDS. Catalysis depends on Cys101, which acts as the Nucleophile. A disulfide bond links Cys101 and Cys193. Gly125 serves as a coordination point for ATP. The interval 143 to 145 is interaction with tRNA; the sequence is KDQ. Residue Cys193 is the Cysteine persulfide intermediate of the active site.

It belongs to the MnmA/TRMU family.

The protein resides in the cytoplasm. The catalysed reaction is S-sulfanyl-L-cysteinyl-[protein] + uridine(34) in tRNA + AH2 + ATP = 2-thiouridine(34) in tRNA + L-cysteinyl-[protein] + A + AMP + diphosphate + H(+). In terms of biological role, catalyzes the 2-thiolation of uridine at the wobble position (U34) of tRNA, leading to the formation of s(2)U34. The sequence is that of tRNA-specific 2-thiouridylase MnmA from Mycobacterium sp. (strain KMS).